The primary structure comprises 562 residues: Long-chain-fatty-acid--CoA ligase (562 aa).

213-224 lines the ATP pocket; it reads YTGGTTGVAKGA.

This sequence belongs to the ATP-dependent AMP-binding enzyme family. It depends on Mg(2+) as a cofactor.

It is found in the membrane. The catalysed reaction is a long-chain fatty acid + ATP + CoA = a long-chain fatty acyl-CoA + AMP + diphosphate. It functions in the pathway lipid metabolism; fatty acid beta-oxidation. In terms of biological role, catalyzes the esterification, concomitant with transport, of exogenous long-chain fatty acids into metabolically active CoA thioesters for subsequent degradation or incorporation into phospholipids. In Yersinia pestis, this protein is Long-chain-fatty-acid--CoA ligase (fadD).